The following is a 271-amino-acid chain: Interleukin-1 alpha (271 aa).

A propeptide spanning residues 1 to 112 is cleaved from the precursor; sequence MAKVPDMFED…DSEEEIIKPR (112 aa). Lys-82 carries the post-translational modification N6-acetyllysine. A nuclear localization signal (NLS) region spans residues 82–86; sequence KKRRL. The residue at position 87 (Ser-87) is a Phosphoserine. Residues Asn-102, Asn-121, Asn-137, Asn-141, and Asn-211 are each glycosylated (N-linked (GlcNAc...) asparagine).

This sequence belongs to the IL-1 family. As to quaternary structure, monomer. Interacts with TMED10; the interaction mediates the translocation from the cytoplasm into the ERGIC (endoplasmic reticulum-Golgi intermediate compartment) and thereby secretion. Interacts with IL1R1. Interacts with S100A13; this interaction is the first step in the export of IL1A, followed by direct translocation of this complex across the plasma membrane. In terms of processing, acetylated within its nuclear localization sequence, which impacts subcellular localization. Post-translationally, proteolytic processed by CAPN1 in a calcium-dependent manner. Cleavage from 31 kDa precursor to 18 kDa biologically active molecules. Phosphorylated. Phosphorylation greatly enhances susceptibility to digestion and promotes the conversion of pre-IL1A alpha to the biologically active IL1A.

It is found in the nucleus. The protein localises to the cytoplasm. The protein resides in the secreted. Cytokine constitutively present intracellularly in nearly all resting non-hematopoietic cells that plays an important role in inflammation and bridges the innate and adaptive immune systems. After binding to its receptor IL1R1 together with its accessory protein IL1RAP, forms the high affinity interleukin-1 receptor complex. Signaling involves the recruitment of adapter molecules such as MYD88, IRAK1 or IRAK4. In turn, mediates the activation of NF-kappa-B and the three MAPK pathways p38, p42/p44 and JNK pathways. Within the cell, acts as an alarmin and cell death results in its liberation in the extracellular space after disruption of the cell membrane to induce inflammation and alert the host to injury or damage. In addition to its role as a danger signal, which occurs when the cytokine is passively released by cell necrosis, directly senses DNA damage and acts as signal for genotoxic stress without loss of cell integrity. The protein is Interleukin-1 alpha (IL1A) of Macaca mulatta (Rhesus macaque).